Consider the following 887-residue polypeptide: 3-hydroxy-3-methylglutaryl-coenzyme A reductase (887 aa).

Residues M1 to H9 lie on the Cytoplasmic side of the membrane. A helical membrane pass occupies residues G10 to G39. Residues N40–D56 lie on the Lumenal side of the membrane. Residues V57 to F78 traverse the membrane as a helical segment. The region spanning D61 to L218 is the SSD domain. The short motif at Y75 to F78 is the INSIG-binding motif element. The Cytoplasmic segment spans residues Q79–K89. Residue K89 forms a Glycyl lysine isopeptide (Lys-Gly) (interchain with G-Cter in ubiquitin) linkage. The helical transmembrane segment at Y90–L114 threads the bilayer. Over D115 to E123 the chain is Lumenal. A helical membrane pass occupies residues A124–S149. Topologically, residues Q150–R159 are cytoplasmic. Residues G160 to V187 form a helical membrane-spanning segment. The Lumenal segment spans residues R188–E191. The chain crosses the membrane as a helical span at residues I192–L220. Residues E221–K248 lie on the Cytoplasmic side of the membrane. A Glycyl lysine isopeptide (Lys-Gly) (interchain with G-Cter in ubiquitin) cross-link involves residue K248. A helical transmembrane segment spans residues P249–A275. Residues D276 to K314 lie on the Lumenal side of the membrane. N-linked (GlcNAc...) asparagine glycosylation occurs at N281. The helical transmembrane segment at M315 to F339 threads the bilayer. The Cytoplasmic portion of the chain corresponds to E340–A887. Active-site charge relay system residues include E558, K690, and D766. H865 functions as the Proton donor in the catalytic mechanism. At S871 the chain carries Phosphoserine; by AMPK.

This sequence belongs to the HMG-CoA reductase family. Homotetramer. Homodimer. Interacts (via its SSD) with INSIG1; the interaction, accelerated by sterols, leads to the recruitment of HMGCR to AMFR/gp78 for its ubiquitination by the sterol-mediated ERAD pathway. Interacts with UBIAD1. N-glycosylated. Glycosylated with high mannose chains including Man(6)(GlcNAc)(2), Man(7)(GlcNAc)(2) and Man(8)(GlcNAc)(2). Deglycosylated by NGLY1 on release from the endoplasmic reticulum (ER) in a sterol-mediated manner. Post-translationally, undergoes sterol-mediated ubiquitination and ER-associated degradation (ERAD). Accumulation of sterols in the endoplasmic reticulum (ER) membrane, triggers binding of the reductase to the ER membrane protein INSIG1 or INSIG2. The INSIG1 binding leads to the recruitment of the ubiquitin ligase, AMFR/gp78, RNF139 or RNF145, initiating ubiquitination of the reductase. The ubiquitinated reductase is then extracted from the ER membrane and delivered to cytosolic 26S proteosomes by a mechanism probably mediated by the ATPase Valosin-containing protein VCP/p97. The INSIG2-binding leads to the recruitment of the ubiquitin ligase RNF139, initiating ubiquitination of the reductase. Lys-248 is the main site of ubiquitination. Ubiquitination is enhanced by the presence of a geranylgeranylated protein. In terms of processing, phosphorylated. Phosphorylation at Ser-871 reduces the catalytic activity.

It localises to the endoplasmic reticulum membrane. Its subcellular location is the peroxisome membrane. The catalysed reaction is (R)-mevalonate + 2 NADP(+) + CoA = (3S)-3-hydroxy-3-methylglutaryl-CoA + 2 NADPH + 2 H(+). It functions in the pathway metabolic intermediate biosynthesis; (R)-mevalonate biosynthesis; (R)-mevalonate from acetyl-CoA: step 3/3. With respect to regulation, regulated by a negative feedback mechanism through sterols and non-sterol metabolites derived from mevalonate. Phosphorylation at Ser-871 down-regulates the catalytic activity. In terms of biological role, catalyzes the conversion of (3S)-hydroxy-3-methylglutaryl-CoA (HMG-CoA) to mevalonic acid, the rate-limiting step in the synthesis of cholesterol and other isoprenoids, thus plays a critical role in cellular cholesterol homeostasis. The polypeptide is 3-hydroxy-3-methylglutaryl-coenzyme A reductase (HMGCR) (Cricetulus griseus (Chinese hamster)).